Reading from the N-terminus, the 473-residue chain is Eukaryotic translation initiation factor 2 subunit gamma (473 aa).

The tr-type G domain occupies 40–250; that stretch reads QATINIGTIG…AICNIAPPNY (211 aa). The interval 49–56 is G1; the sequence is GHVAHGKS. A GTP-binding site is contributed by 52-57; it reads AHGKSS. The interval 77–81 is G2; it reads NITIK. A G3 region spans residues 135–138; sequence DCPG. GTP is bound by residues 193–196 and 228–230; these read NKMD and SAQ. A G4 region spans residues 193–196; it reads NKMD. The G5 stretch occupies residues 228 to 230; sequence SAQ. Positions 458–470 are interacts with CDC123; that stretch reads GKVRSGGTLCEVV.

Belongs to the TRAFAC class translation factor GTPase superfamily. Classic translation factor GTPase family. EIF2G subfamily. As to quaternary structure, eukaryotic translation initiation factor 2 eIF2 is a heterotrimeric complex composed of an alpha, a beta and a gamma subunit. The factors eIF-1, eIF-2, eIF-3, TIF5/eIF-5 and methionyl-tRNAi form a multifactor complex (MFC) that may bind to the 40S ribosome.

The protein localises to the cytoplasm. Its subcellular location is the cytosol. It catalyses the reaction GTP + H2O = GDP + phosphate + H(+). Functionally, as a subunit of eukaryotic initiation factor 2 eIF2, involved in the early steps of protein synthesis. In the presence of GTP, eIF-2 forms a ternary complex with initiator tRNA Met-tRNAi and then recruits the 40S ribosomal complex and initiation factors eIF-1, eIF-1A and eIF-3 to form the 43S pre-initiation complex (43S PIC), a step that determines the rate of protein translation. The 43S PIC binds to mRNA and scans downstream to the initiation codon, where it forms a 48S initiation complex by codon-anticodon base pairing. This leads to the displacement of eIF-1 to allow GTPase-activating protein (GAP) eIF-5-mediated hydrolysis of eIF2-bound GTP. Hydrolysis of GTP and release of Pi, which makes GTP hydrolysis irreversible, causes the release of the eIF-2-GDP binary complex from the 40S subunit, an event that is essential for the subsequent joining of the 60S ribosomal subunit to form an elongation-competent 80S ribosome. In order for eIF-2 to recycle and catalyze another round of initiation, the GDP bound to eIF-2 must be exchanged with GTP by way of a reaction catalyzed by GDP-GTP exchange factor (GEF) eIF-2B. The chain is Eukaryotic translation initiation factor 2 subunit gamma from Cryptococcus neoformans var. grubii serotype A (strain H99 / ATCC 208821 / CBS 10515 / FGSC 9487) (Filobasidiella neoformans var. grubii).